Here is a 188-residue protein sequence, read N- to C-terminus: Methylamine dehydrogenase light chain (188 aa).

Residues 1–57 (MLGNFRFDDMVEKLSRRVAGRTSRRGAIGRLGTVLAGAALVPLLPVDRRGRVSRANA) constitute a signal peptide (tat-type signal). 6 disulfide bridges follow: cysteine 80–cysteine 145, cysteine 86–cysteine 118, cysteine 93–cysteine 178, cysteine 95–cysteine 143, cysteine 103–cysteine 134, and cysteine 135–cysteine 166. Tryptophan 114 bears the Tryptophylquinone mark. Positions 114–165 (WVASCYNPTDGQSYLIAYRDCCGYNVSGRCPCLNTEGELPVYRPEFANDIIW) form a cross-link, tryptophan tryptophylquinone (Trp-Trp).

Belongs to the aromatic amine dehydrogenase light chain family. In terms of assembly, heterotetramer of two light and two heavy chains. It depends on tryptophan tryptophylquinone residue as a cofactor. Predicted to be exported by the Tat system. The position of the signal peptide cleavage has been experimentally proven. Post-translationally, tryptophan tryptophylquinone (TTQ) is formed by oxidation of the indole ring of a tryptophan to form tryptophylquinone followed by covalent cross-linking with another tryptophan residue.

The protein resides in the periplasm. It catalyses the reaction 2 oxidized [amicyanin] + methylamine + H2O = 2 reduced [amicyanin] + formaldehyde + NH4(+) + 2 H(+). It functions in the pathway one-carbon metabolism; methylamine degradation; formaldehyde from methylamine: step 1/1. In terms of biological role, methylamine dehydrogenase carries out the oxidation of methylamine. Electrons are passed from methylamine dehydrogenase to amicyanin. This chain is Methylamine dehydrogenase light chain (mauA), found in Paracoccus versutus (Thiobacillus versutus).